The sequence spans 499 residues: Probable cytosol aminopeptidase (499 aa).

K267 and D272 together coordinate Mn(2+). K279 is a catalytic residue. 3 residues coordinate Mn(2+): D290, D349, and E351. R353 is a catalytic residue.

Belongs to the peptidase M17 family. Requires Mn(2+) as cofactor.

It is found in the cytoplasm. It carries out the reaction Release of an N-terminal amino acid, Xaa-|-Yaa-, in which Xaa is preferably Leu, but may be other amino acids including Pro although not Arg or Lys, and Yaa may be Pro. Amino acid amides and methyl esters are also readily hydrolyzed, but rates on arylamides are exceedingly low.. The catalysed reaction is Release of an N-terminal amino acid, preferentially leucine, but not glutamic or aspartic acids.. Its function is as follows. Presumably involved in the processing and regular turnover of intracellular proteins. Catalyzes the removal of unsubstituted N-terminal amino acids from various peptides. In Buchnera aphidicola subsp. Acyrthosiphon pisum (strain Tuc7), this protein is Probable cytosol aminopeptidase.